Reading from the N-terminus, the 167-residue chain is DNA-directed RNA polymerase 19 kDa subunit (167 aa).

The tract at residues 15–41 is disordered; sequence DNDYKSYDEDDDSISDIGETSDDCCTT. Residues 22–36 show a composition bias toward acidic residues; the sequence is DEDDDSISDIGETSD.

This sequence belongs to the poxviridae DNA-directed RNA polymerase 19 kDa subunit family. In terms of assembly, the DNA-dependent RNA polymerase used for intermediate and late genes expression consists of eight subunits (147) kDa, 133 kDa, 35 kDa, 30 kDa, 22 kDa, 19 kDa, 18 kDa and 7 kDa totalling more than 500 kDa in mass. The same holoenzyme, with the addition of the transcription-specificity factor RAP94, is used for early gene expression.

Its subcellular location is the virion. The catalysed reaction is RNA(n) + a ribonucleoside 5'-triphosphate = RNA(n+1) + diphosphate. Part of the DNA-dependent RNA polymerase which catalyzes the transcription of viral DNA into RNA using the four ribonucleoside triphosphates as substrates. Responsible for the transcription of early, intermediate and late genes. DNA-dependent RNA polymerase associates with the early transcription factor (ETF) thereby allowing the early genes transcription. Late transcription, and probably also intermediate transcription, require newly synthesized RNA polymerase. This chain is DNA-directed RNA polymerase 19 kDa subunit (RPO19), found in Vertebrata (FPV).